We begin with the raw amino-acid sequence, 84 residues long: RNA-binding protein Hfq (84 aa).

The region spanning 10–70 (DNVLNQVRKN…VSTIIPGKTL (61 aa)) is the Sm domain.

Belongs to the Hfq family. As to quaternary structure, homohexamer.

Functionally, RNA chaperone that binds small regulatory RNA (sRNAs) and mRNAs to facilitate mRNA translational regulation in response to envelope stress, environmental stress and changes in metabolite concentrations. Also binds with high specificity to tRNAs. The polypeptide is RNA-binding protein Hfq (Natranaerobius thermophilus (strain ATCC BAA-1301 / DSM 18059 / JW/NM-WN-LF)).